The sequence spans 122 residues: Ribosome-binding factor A (122 aa).

Belongs to the RbfA family. In terms of assembly, monomer. Binds 30S ribosomal subunits, but not 50S ribosomal subunits or 70S ribosomes.

The protein localises to the cytoplasm. Its function is as follows. One of several proteins that assist in the late maturation steps of the functional core of the 30S ribosomal subunit. Associates with free 30S ribosomal subunits (but not with 30S subunits that are part of 70S ribosomes or polysomes). Required for efficient processing of 16S rRNA. May interact with the 5'-terminal helix region of 16S rRNA. The protein is Ribosome-binding factor A of Anaeromyxobacter sp. (strain Fw109-5).